The following is a 457-amino-acid chain: Cyclic dof factor 2 (457 aa).

The interval 1–130 is disordered; it reads MADPAIKLFG…GGTACSQEGK (130 aa). The span at 22–35 shows a compositional bias: polar residues; sequence DSSSSYTGFLTETQ. 2 stretches are compositionally biased toward acidic residues: residues 45–54 and 62–73; these read TGDDDDEEMG and EGDDVGDGGGES. Composition is skewed to basic and acidic residues over residues 74-94 and 106-118; these read ETDK…RNES and EKTE…KTNE. The segment at 138–192 adopts a Dof-type zinc-finger fold; that stretch reads LPCPRCNSMETKFCYYNNYNVNQPRHFCKKCQRYWTAGGTMRNVPVGAGRRKNKS. Residues Cys-140, Cys-143, Cys-165, and Cys-168 each contribute to the Zn(2+) site. Disordered stretches follow at residues 334 to 377 and 417 to 457; these read QPNS…KSKP and AFRS…HESS. Over residues 337 to 346 the composition is skewed to low complexity; the sequence is SPSGSNPNSP.

As to quaternary structure, interacts with ADO2 (via kelch repeats) and ADO3 (via kelch repeats). In terms of tissue distribution, expressed in the vasculature of cotyledons and hypocotyls, leaves and roots.

The protein localises to the nucleus. In terms of biological role, transcription factor that binds specifically to a 5'-AA[AG]G-3' consensus core sequence. Regulates a photoperiodic flowering response. Transcriptional repressor of 'CONSTANS' expression. The stability of CDF2 is controlled by 'GIGANTEA' and redundantly by ADO3, ADO2 and/or ADO1. This Arabidopsis thaliana (Mouse-ear cress) protein is Cyclic dof factor 2 (CDF2).